A 1034-amino-acid polypeptide reads, in one-letter code: MYKKIDNNKSFVQMEKDILKLWQDRKVVEKSFNSNKDGEYFTFYDGPPTANGKPHIGHVLTRVIKDLIPRYKVMKGYKVLRKAGWDTHGLPVELEVEKSLGISGKPQIEKYGVEDFIKKCKDSVFTYVSQWRKMSDRIGFWVDMDDPYVTYDNHYIESEWWALKQIWDKNLLYKGHKIVPYCPRCGTALSSHEVSQGYKDVKETSVYVKFKIKNEDKYILAWTTTPWTLPNNMALTINKSYDYVEVINDGEHLILAEGLLEKLEGEYEVVKKFKGEEMLGIEYEPMFNFTPFEGKAHYVVHGDYVTLTDGTGIVHTAPAFGEDDSITCIKHNIPMINSVTTQGKFKDEVTPWKGLFVKDADPKIIAYLKEKDILYKAEKFTHSYPFCWRCDTTLLYYPRDTWFIRMSAMRDKLIRNTNDTNWYPDNIRTGRFGKFVEGVIDWGLSRERYWGTPLPIWECECGHRECIGSIKELREKGINVPDDIELHKPYIDGVKLKCDKCHKEMERVPEVIDCWFDSGSMPFAQHHYPFENRELFEKNFPAQFISEAVDQTRGWFYTLMAISTVLFDKSSFENCLVLGHVLDKHGLKMSKHKGNVLSPEVVLENEGADATRWYFYTESAPWLPSRFYEEAVQDSQRKFLGTLWNVYSFYVLYADLDKFNPLEYSHFVSENVMDKWVISRLNSLIKITEGNLDNYRITQAAESIGNFVDELSNWYVRRNRTRFWNEELAEDKVGAYVTLYNVLNKLCLIAAPFVPFMTEEIYQNLVLSLNKNVPESIHLCKWPEYDLNLVDSDLEKNMEECYKIVKLGRSARNAANIKNRQPLSEMLISVKTLPGYYGDIIKSELNIKNIVFNADLSKYVNFNIKPNLPVLGKKYGRMIPKIKQSISSMNQMDLAGKINNNEVVKIKIDETEIELNSENLLITMEGLEGFAFAGEGSTGIVLETTITEELKEEGNLREILSKIQNMRKESGFEVADKIKLYVSDNEKLEEVVKKFEAQIKKETLAVEVAYNENREYSGCNINGEKFNIAVEVLK.

A 'HIGH' region motif is present at residues 48–58 (PTANGKPHIGH). A 'KMSKS' region motif is present at residues 588-592 (KMSKH). K591 provides a ligand contact to ATP.

The protein belongs to the class-I aminoacyl-tRNA synthetase family. IleS type 2 subfamily. As to quaternary structure, monomer. It depends on Zn(2+) as a cofactor.

The protein resides in the cytoplasm. It carries out the reaction tRNA(Ile) + L-isoleucine + ATP = L-isoleucyl-tRNA(Ile) + AMP + diphosphate. Catalyzes the attachment of isoleucine to tRNA(Ile). As IleRS can inadvertently accommodate and process structurally similar amino acids such as valine, to avoid such errors it has two additional distinct tRNA(Ile)-dependent editing activities. One activity is designated as 'pretransfer' editing and involves the hydrolysis of activated Val-AMP. The other activity is designated 'posttransfer' editing and involves deacylation of mischarged Val-tRNA(Ile). The protein is Isoleucine--tRNA ligase of Clostridium kluyveri (strain ATCC 8527 / DSM 555 / NBRC 12016 / NCIMB 10680 / K1).